We begin with the raw amino-acid sequence, 29 residues long: Cytochrome b6-f complex subunit 8 (29 aa).

A helical membrane pass occupies residues 3–23 (LITITWASVMVAFTFSLSLVV).

This sequence belongs to the PetN family. In terms of assembly, the 4 large subunits of the cytochrome b6-f complex are cytochrome b6, subunit IV (17 kDa polypeptide, PetD), cytochrome f and the Rieske protein, while the 4 small subunits are PetG, PetL, PetM and PetN. The complex functions as a dimer.

The protein localises to the plastid. Its subcellular location is the chloroplast thylakoid membrane. Functionally, component of the cytochrome b6-f complex, which mediates electron transfer between photosystem II (PSII) and photosystem I (PSI), cyclic electron flow around PSI, and state transitions. The polypeptide is Cytochrome b6-f complex subunit 8 (Chaetosphaeridium globosum (Charophycean green alga)).